Consider the following 688-residue polypeptide: Sodium channel and clathrin linker 1 (688 aa).

Ala-2 carries the N-acetylalanine modification. 2 coiled-coil regions span residues 59-108 (LIAE…AVEK) and 152-673 (QTAS…SVIT). The residue at position 681 (Ser-681) is a Phosphoserine.

As to quaternary structure, interacts with SCN10A and clathrin. Identified in a complex containing SCN10A, clathrin and SCLT1.

The protein localises to the cytoplasm. The protein resides in the cytoskeleton. Its subcellular location is the microtubule organizing center. It localises to the centrosome. It is found in the centriole. In terms of biological role, adapter protein that links SCN10A to clathrin. Regulates SCN10A channel activity, possibly by promoting channel internalization. The polypeptide is Sodium channel and clathrin linker 1 (Sclt1) (Mus musculus (Mouse)).